Consider the following 609-residue polypeptide: Zinc metalloproteinase/disintegrin-like HR1a (609 aa).

The signal sequence occupies residues 1 to 20 (MIQVLLVTICLAVFPYQGSS). Residues 21–190 (IILGSGNVND…KKASKLVVTA (170 aa)) constitute a propeptide that is removed on maturation. One can recognise a Peptidase M12B domain in the interval 200 to 396 (RFIELVIVAD…DEPQCILNEP (197 aa)). Ca(2+)-binding residues include Glu203 and Asp287. The N-linked (GlcNAc...) asparagine glycan is linked to Asn298. Cystine bridges form between Cys311–Cys391, Cys351–Cys375, and Cys353–Cys358. His336 contributes to the Zn(2+) binding site. Residue Glu337 is part of the active site. Residues His340 and His346 each coordinate Zn(2+). N-linked (GlcNAc...) asparagine glycosylation occurs at Asn350. N-linked (GlcNAc...) asparagine glycosylation occurs at Asn374. 2 residues coordinate Ca(2+): Cys391 and Asn394. A propeptide spanning residues 397–400 (LRTD) is cleaved from the precursor. Positions 404–490 (PPVCGNELLE…DCPTDRFHRN (87 aa)) constitute a Disintegrin domain. Residues Val406, Asn409, Leu411, Glu413, Glu416, and Asp419 each coordinate Ca(2+). Disulfide bonds link Cys407/Cys426, Cys407/Cys436, Cys418/Cys431, Cys418/Cys436, Cys420/Cys426, Cys430/Cys453, Cys444/Cys450, Cys449/Cys475, Cys462/Cys482, Cys469/Cys494, Cys469/Cys501, Cys494/Cys506, Cys501/Cys506, Cys513/Cys528, Cys513/Cys563, Cys528/Cys571, Cys541/Cys551, Cys551/Cys558, Cys558/Cys597, Cys563/Cys571, Cys591/Cys602, and Cys597/Cys602. Residues 468–470 (ECD) carry the D/ECD-tripeptide motif. Ca(2+) is bound by residues Asp470, Glu473, and Asp485. A glycan (N-linked (GlcNAc...) asparagine) is linked at Asn520.

This sequence belongs to the venom metalloproteinase (M12B) family. P-III subfamily. P-IIIb sub-subfamily. As to quaternary structure, monomer. The cofactor is Zn(2+). Expressed by the venom gland.

It is found in the secreted. In terms of biological role, zinc protease that induces hemorrhage and has proteolytic activity. Has preference for Ala, His, Pro, Met, and Tyr at the P1 position, in descending order (in vitro). Predominantly prefers Val and Asp at the P3 and P2 positions, respectively. Inhibits platelet aggregation induced by ADP, thrombin, platelet-activating factor and collagen. Acts by inhibiting fibrinogen interaction with platelet receptors alpha-IIb/beta-3 (ITGA2B/ITGB3). This Protobothrops flavoviridis (Habu) protein is Zinc metalloproteinase/disintegrin-like HR1a.